The chain runs to 496 residues: Glycerol kinase (496 aa).

Threonine 12 contacts ADP. 3 residues coordinate ATP: threonine 12, threonine 13, and serine 14. Threonine 12 provides a ligand contact to sn-glycerol 3-phosphate. Arginine 16 lines the ADP pocket. Residues arginine 82, glutamate 83, and tyrosine 134 each contribute to the sn-glycerol 3-phosphate site. The glycerol site is built by arginine 82, glutamate 83, and tyrosine 134. Phosphohistidine; by HPr is present on histidine 230. Sn-glycerol 3-phosphate is bound at residue aspartate 244. The glycerol site is built by aspartate 244 and glutamine 245. ADP contacts are provided by threonine 266 and glycine 309. Threonine 266, glycine 309, glutamine 313, and glycine 410 together coordinate ATP. Positions 410 and 414 each coordinate ADP.

Belongs to the FGGY kinase family. Homotetramer and homodimer (in equilibrium). Post-translationally, the phosphoenolpyruvate-dependent sugar phosphotransferase system (PTS), including enzyme I, and histidine-containing protein (HPr) are required for the phosphorylation, which leads to the activation of the enzyme.

It carries out the reaction glycerol + ATP = sn-glycerol 3-phosphate + ADP + H(+). It participates in polyol metabolism; glycerol degradation via glycerol kinase pathway; sn-glycerol 3-phosphate from glycerol: step 1/1. With respect to regulation, activated by phosphorylation and inhibited by fructose 1,6-bisphosphate (FBP). In terms of biological role, key enzyme in the regulation of glycerol uptake and metabolism. Catalyzes the phosphorylation of glycerol to yield sn-glycerol 3-phosphate. The sequence is that of Glycerol kinase from Bacillus cereus (strain G9842).